The sequence spans 720 residues: 1,4-alpha-glucan branching enzyme GlgB (720 aa).

Aspartate 400 serves as the catalytic Nucleophile. Glutamate 453 (proton donor) is an active-site residue.

It belongs to the glycosyl hydrolase 13 family. GlgB subfamily. Monomer.

It catalyses the reaction Transfers a segment of a (1-&gt;4)-alpha-D-glucan chain to a primary hydroxy group in a similar glucan chain.. It participates in glycan biosynthesis; glycogen biosynthesis. Catalyzes the formation of the alpha-1,6-glucosidic linkages in glycogen by scission of a 1,4-alpha-linked oligosaccharide from growing alpha-1,4-glucan chains and the subsequent attachment of the oligosaccharide to the alpha-1,6 position. This Chlamydia pneumoniae (Chlamydophila pneumoniae) protein is 1,4-alpha-glucan branching enzyme GlgB.